Reading from the N-terminus, the 64-residue chain is Translational regulator CsrA (64 aa).

This sequence belongs to the CsrA/RsmA family. Homodimer; the beta-strands of each monomer intercalate to form a hydrophobic core, while the alpha-helices form wings that extend away from the core.

The protein resides in the cytoplasm. In terms of biological role, a key translational regulator that binds mRNA to regulate translation initiation and/or mRNA stability. Mediates global changes in gene expression, shifting from rapid growth to stress survival by linking envelope stress, the stringent response and the catabolite repression systems. Usually binds in the 5'-UTR; binding at or near the Shine-Dalgarno sequence prevents ribosome-binding, repressing translation, binding elsewhere in the 5'-UTR can activate translation and/or stabilize the mRNA. Its function is antagonized by small RNA(s). The protein is Translational regulator CsrA of Actinobacillus pleuropneumoniae serotype 5b (strain L20).